Consider the following 342-residue polypeptide: Spore photoproduct lyase (342 aa).

Residues 77 to 305 (SKPSAEYAIP…EEKRRYKWGR (229 aa)) enclose the Radical SAM core domain. [4Fe-4S] cluster is bound by residues Cys-91, Cys-95, and Cys-98. Positions 218-235 (EAAVKVAKAGYPLGFIVA) form a DNA-binding region, H-T-H motif.

It belongs to the radical SAM superfamily. SPL family. As to quaternary structure, monomer or homodimer. The cofactor is [4Fe-4S] cluster. Requires S-adenosyl-L-methionine as cofactor.

The catalysed reaction is (5R)-5,6-dihydro-5-(thymidin-7-yl)thymidine in DNA = a thymidine dimer in DNA. Involved in repair of UV radiation-induced DNA damage during spore germination. Can repair thymine dimer 5-thyminyl-5,6-dihydrothymine (known as spore photoproduct (SP)) by in situ monomerization of SP to two thymines. This is Spore photoproduct lyase (splB) from Bacillus subtilis (strain 168).